The chain runs to 302 residues: Quinolinate synthase (302 aa).

Iminosuccinate contacts are provided by H24 and S41. [4Fe-4S] cluster is bound at residue C86. Residues 112–114 and S129 contribute to the iminosuccinate site; that span reads YVN. C171 lines the [4Fe-4S] cluster pocket. Iminosuccinate is bound by residues 197 to 199 and T214; that span reads HPE. C259 provides a ligand contact to [4Fe-4S] cluster.

The protein belongs to the quinolinate synthase family. Type 2 subfamily. Requires [4Fe-4S] cluster as cofactor.

It is found in the cytoplasm. It carries out the reaction iminosuccinate + dihydroxyacetone phosphate = quinolinate + phosphate + 2 H2O + H(+). It functions in the pathway cofactor biosynthesis; NAD(+) biosynthesis; quinolinate from iminoaspartate: step 1/1. Its function is as follows. Catalyzes the condensation of iminoaspartate with dihydroxyacetone phosphate to form quinolinate. The polypeptide is Quinolinate synthase (Dehalococcoides mccartyi (strain CBDB1)).